A 443-amino-acid polypeptide reads, in one-letter code: Carbohydrate sulfotransferase 9 (443 aa).

The Cytoplasmic portion of the chain corresponds to 1 to 12 (MQPSEMVMNPKQ). Residues 13–33 (VFLSVLIFGVAGLLLFMYLQV) traverse the membrane as a helical; Signal-anchor for type II membrane protein segment. Residues 34 to 443 (WIEEQHTGRV…LMFNYTTPFL (410 aa)) are Lumenal-facing. The span at 108–128 (LTKTSHSQGGDQALSKSTGSP) shows a compositional bias: polar residues. The interval 108 to 132 (LTKTSHSQGGDQALSKSTGSPTEKL) is disordered. Residue Asn-159 is glycosylated (N-linked (GlcNAc...) asparagine). Position 220–226 (220–226 (PKAGCSN)) interacts with 3'-phosphoadenylyl sulfate. A glycan (N-linked (GlcNAc...) asparagine) is linked at Asn-243. Residue 280–288 (RDPMERLVS) participates in 3'-phosphoadenylyl sulfate binding. N-linked (GlcNAc...) asparagine glycosylation is found at Asn-324 and Asn-437.

The protein belongs to the sulfotransferase 2 family. As to expression, highly expressed in trachea. Also expressed in fetal lung, adult pancreas, testis and salivary gland. Expressed at low level in pituitary gland, apex of the heart, adult lung, prostate and mammary gland. Weakly or not expressed in heart, liver and spinal cord.

It localises to the golgi apparatus membrane. The protein localises to the secreted. Its function is as follows. Catalyzes the transfer of sulfate to position 4 of non-reducing N-acetylgalactosamine (GalNAc) residues in both N-glycans and O-glycans. Participates in biosynthesis of glycoprotein hormones lutropin and thyrotropin, by mediating sulfation of their carbohydrate structures. Has a higher activity toward carbonic anhydrase VI than toward lutropin. Only active against terminal GalNAcbeta1,GalNAcbeta. Isoform 2, but not isoform 1, is active toward chondroitin. This chain is Carbohydrate sulfotransferase 9 (CHST9), found in Homo sapiens (Human).